A 170-amino-acid chain; its full sequence is Metalloproteinase inhibitor 4 (170 aa).

An NTR domain is found at 1-105 (ISSEKVVPAS…SLNHHYHLNC (105 aa)). Involved in metalloproteinase-binding regions lie at residues 6–9 (VVPA) and 48–49 (SS). 3 disulfide bridges follow: C107–C154, C112–C117, and C125–C146.

The protein belongs to the protease inhibitor I35 (TIMP) family.

It is found in the secreted. Its function is as follows. Complexes with metalloproteinases (such as collagenases) and irreversibly inactivates them by binding to their catalytic zinc cofactor. The sequence is that of Metalloproteinase inhibitor 4 (TIMP4) from Oryctolagus cuniculus (Rabbit).